The sequence spans 175 residues: NADH-ubiquinone oxidoreductase chain 6 (175 aa).

5 consecutive transmembrane segments (helical) span residues 1 to 21 (MMLY…VGFS), 25 to 45 (SPIY…GIVL), 47 to 67 (FGGS…MMVV), 88 to 108 (AVLG…YYVL), and 149 to 169 (YGTW…VVIM).

This sequence belongs to the complex I subunit 6 family. Core subunit of respiratory chain NADH dehydrogenase (Complex I) which is composed of 45 different subunits.

The protein resides in the mitochondrion inner membrane. It carries out the reaction a ubiquinone + NADH + 5 H(+)(in) = a ubiquinol + NAD(+) + 4 H(+)(out). Its function is as follows. Core subunit of the mitochondrial membrane respiratory chain NADH dehydrogenase (Complex I) which catalyzes electron transfer from NADH through the respiratory chain, using ubiquinone as an electron acceptor. Essential for the catalytic activity and assembly of complex I. The chain is NADH-ubiquinone oxidoreductase chain 6 (MT-ND6) from Bos indicus (Zebu).